Here is a 408-residue protein sequence, read N- to C-terminus: LL-diaminopimelate aminotransferase (408 aa).

Tyr-15 and Gly-42 together coordinate substrate. Residues Tyr-72, 108-109 (SK), Tyr-132, Asn-187, Tyr-218, and 246-248 (SFS) contribute to the pyridoxal 5'-phosphate site. Residues Lys-109, Tyr-132, and Asn-187 each contribute to the substrate site. At Lys-249 the chain carries N6-(pyridoxal phosphate)lysine. Residues Arg-257 and Asn-292 each contribute to the pyridoxal 5'-phosphate site. Substrate-binding residues include Asn-292 and Arg-388.

The protein belongs to the class-I pyridoxal-phosphate-dependent aminotransferase family. LL-diaminopimelate aminotransferase subfamily. As to quaternary structure, homodimer. It depends on pyridoxal 5'-phosphate as a cofactor.

It carries out the reaction (2S,6S)-2,6-diaminopimelate + 2-oxoglutarate = (S)-2,3,4,5-tetrahydrodipicolinate + L-glutamate + H2O + H(+). It functions in the pathway amino-acid biosynthesis; L-lysine biosynthesis via DAP pathway; LL-2,6-diaminopimelate from (S)-tetrahydrodipicolinate (aminotransferase route): step 1/1. Its function is as follows. Involved in the synthesis of meso-diaminopimelate (m-DAP or DL-DAP), required for both lysine and peptidoglycan biosynthesis. Catalyzes the direct conversion of tetrahydrodipicolinate to LL-diaminopimelate. This is LL-diaminopimelate aminotransferase from Prochlorococcus marinus (strain AS9601).